The following is a 472-amino-acid chain: Homeobox protein PKNOX2 (472 aa).

The disordered stretch occupies residues 1-62 (MMQHASPAPA…STPVPSAPID (62 aa)). Polar residues predominate over residues 26 to 38 (DSPQMTATAQPPS). The segment covering 46 to 56 (SAPSAAASTPV) has biased composition (low complexity). The MEIS N-terminal domain occupies 96 to 179 (GSECITSASF…MHSDNLLRND (84 aa)). A DNA-binding region (homeobox) is located at residues 291-350 (KRGVLPKHATNIMRSWLFQHLMHPYPTEDEKRQIAAQTNLTLLQVNNWFINARRRILQPM). Disordered regions lie at residues 351 to 371 (LDAS…QHRP), 386 to 405 (QQQG…LDNL), and 422 to 472 (MAAH…DSLE). The span at 361 to 371 (KAKKIKSQHRP) shows a compositional bias: basic residues. Positions 429–454 (LDGTEEEDEDEMEEEEEEELEEEVDE) are enriched in acidic residues.

Belongs to the TALE/MEIS homeobox family.

It is found in the nucleus. The chain is Homeobox protein PKNOX2 (PKNOX2) from Homo sapiens (Human).